The sequence spans 194 residues: ATP-dependent Clp protease proteolytic subunit 3 (194 aa).

The Nucleophile role is filled by serine 96. Histidine 121 is a catalytic residue.

This sequence belongs to the peptidase S14 family. In terms of assembly, fourteen ClpP subunits assemble into 2 heptameric rings which stack back to back to give a disk-like structure with a central cavity, resembling the structure of eukaryotic proteasomes.

Its subcellular location is the cytoplasm. It carries out the reaction Hydrolysis of proteins to small peptides in the presence of ATP and magnesium. alpha-casein is the usual test substrate. In the absence of ATP, only oligopeptides shorter than five residues are hydrolyzed (such as succinyl-Leu-Tyr-|-NHMec, and Leu-Tyr-Leu-|-Tyr-Trp, in which cleavage of the -Tyr-|-Leu- and -Tyr-|-Trp bonds also occurs).. In terms of biological role, cleaves peptides in various proteins in a process that requires ATP hydrolysis. Has a chymotrypsin-like activity. Plays a major role in the degradation of misfolded proteins. The polypeptide is ATP-dependent Clp protease proteolytic subunit 3 (Prochlorococcus marinus (strain NATL2A)).